The following is a 462-amino-acid chain: GTPase Der (462 aa).

EngA-type G domains lie at P3–M166 and I175–I348. GTP is bound by residues G9 to S16, D56 to I60, N118 to D121, G181 to S188, D228 to V232, and N293 to D296. A KH-like domain is found at Q349–Q433.

The protein belongs to the TRAFAC class TrmE-Era-EngA-EngB-Septin-like GTPase superfamily. EngA (Der) GTPase family. As to quaternary structure, associates with the 50S ribosomal subunit.

GTPase that plays an essential role in the late steps of ribosome biogenesis. This Legionella pneumophila (strain Lens) protein is GTPase Der.